The following is a 915-amino-acid chain: Rab3 GTPase-activating protein catalytic subunit (915 aa).

This sequence belongs to the Rab3-GAP catalytic subunit family. As to quaternary structure, the Rab3 GTPase-activating complex is a heterodimer composed of rbg-1 and rbg-2.

Its subcellular location is the cytoplasm. In terms of biological role, probable catalytic subunit of a GTPase activating protein that has specificity for Rab3 subfamily. Rab3 proteins are involved in regulated exocytosis of neurotransmitters and hormones. Specifically converts active Rab3-GTP to the inactive form Rab3-GDP. This is Rab3 GTPase-activating protein catalytic subunit (rbg-1) from Caenorhabditis elegans.